The sequence spans 178 residues: Large ribosomal subunit protein uL6 (178 aa).

Belongs to the universal ribosomal protein uL6 family. In terms of assembly, part of the 50S ribosomal subunit.

Its function is as follows. This protein binds to the 23S rRNA, and is important in its secondary structure. It is located near the subunit interface in the base of the L7/L12 stalk, and near the tRNA binding site of the peptidyltransferase center. In Helicobacter pylori (strain HPAG1), this protein is Large ribosomal subunit protein uL6.